A 236-amino-acid polypeptide reads, in one-letter code: uncharacterized protein (236 aa).

Disordered regions lie at residues 1-48, 67-122, and 134-192; these read MHLR…RTFS, VHTP…HSPR, and KLHP…PNNT. A compositionally biased stretch (basic residues) spans 85–99; sequence RAHRTAKHPARRQSC. Over residues 180–189 the composition is skewed to pro residues; it reads PSPAIKPSPP.

This is an uncharacterized protein from Encephalitozoon cuniculi (strain GB-M1) (Microsporidian parasite).